We begin with the raw amino-acid sequence, 227 residues long: Lipoprotein-releasing system ATP-binding protein LolD (227 aa).

The 222-residue stretch at 6 to 227 folds into the ABC transporter domain; it reads LTSQKLYKSY…LHEGSLYARE (222 aa). Residue 42 to 49 participates in ATP binding; it reads GPSGSGKS.

This sequence belongs to the ABC transporter superfamily. Lipoprotein translocase (TC 3.A.1.125) family. In terms of assembly, the complex is composed of two ATP-binding proteins (LolD) and two transmembrane proteins (LolC and LolE).

It is found in the cell inner membrane. Part of the ABC transporter complex LolCDE involved in the translocation of mature outer membrane-directed lipoproteins, from the inner membrane to the periplasmic chaperone, LolA. Responsible for the formation of the LolA-lipoprotein complex in an ATP-dependent manner. This Legionella pneumophila (strain Lens) protein is Lipoprotein-releasing system ATP-binding protein LolD.